The sequence spans 78 residues: Conotoxin Cl14.9 (78 aa).

Residues 1 to 22 form the signal peptide; sequence MTAKATLLVLALVVMATSGVSS. A propeptide spanning residues 23 to 47 is cleaved from the precursor; it reads ASVAGGPVVNSDTVSRSDPERLSTR. Residue I70 is modified to Isoleucine amide. Positions 74–78 are excised as a propeptide; sequence DITQQ.

In terms of processing, contains 2 disulfide bonds. As to expression, expressed by the venom duct.

The protein localises to the secreted. In Californiconus californicus (California cone), this protein is Conotoxin Cl14.9.